Here is a 150-residue protein sequence, read N- to C-terminus: Large ribosomal subunit protein bL9 (150 aa).

Belongs to the bacterial ribosomal protein bL9 family.

Functionally, binds to the 23S rRNA. The chain is Large ribosomal subunit protein bL9 from Herminiimonas arsenicoxydans.